The chain runs to 92 residues: Small ribosomal subunit protein uS19 (92 aa).

The protein belongs to the universal ribosomal protein uS19 family.

Protein S19 forms a complex with S13 that binds strongly to the 16S ribosomal RNA. This chain is Small ribosomal subunit protein uS19, found in Geobacillus kaustophilus (strain HTA426).